Consider the following 289-residue polypeptide: Acetyl-coenzyme A carboxylase carboxyl transferase subunit beta (289 aa).

Positions 28–289 (VMTKCPKCKK…QGGEMAVWQS (262 aa)) constitute a CoA carboxyltransferase N-terminal domain. Positions 32, 35, 51, and 54 each coordinate Zn(2+). The C4-type zinc finger occupies 32–54 (CPKCKKIMYTKEVLKNLKVCVNC).

Belongs to the AccD/PCCB family. As to quaternary structure, acetyl-CoA carboxylase is a heterohexamer composed of biotin carboxyl carrier protein (AccB), biotin carboxylase (AccC) and two subunits each of ACCase subunit alpha (AccA) and ACCase subunit beta (AccD). Zn(2+) serves as cofactor.

The protein localises to the cytoplasm. It catalyses the reaction N(6)-carboxybiotinyl-L-lysyl-[protein] + acetyl-CoA = N(6)-biotinyl-L-lysyl-[protein] + malonyl-CoA. The protein operates within lipid metabolism; malonyl-CoA biosynthesis; malonyl-CoA from acetyl-CoA: step 1/1. Its function is as follows. Component of the acetyl coenzyme A carboxylase (ACC) complex. Biotin carboxylase (BC) catalyzes the carboxylation of biotin on its carrier protein (BCCP) and then the CO(2) group is transferred by the transcarboxylase to acetyl-CoA to form malonyl-CoA. In Bacillus cereus (strain ZK / E33L), this protein is Acetyl-coenzyme A carboxylase carboxyl transferase subunit beta.